Consider the following 152-residue polypeptide: Nucleoside diphosphate kinase (152 aa).

ATP contacts are provided by K11, F59, R87, T93, R104, and N114. Catalysis depends on H117, which acts as the Pros-phosphohistidine intermediate.

This sequence belongs to the NDK family. In terms of assembly, homotetramer. Mg(2+) serves as cofactor.

It is found in the cytoplasm. The enzyme catalyses a 2'-deoxyribonucleoside 5'-diphosphate + ATP = a 2'-deoxyribonucleoside 5'-triphosphate + ADP. The catalysed reaction is a ribonucleoside 5'-diphosphate + ATP = a ribonucleoside 5'-triphosphate + ADP. In terms of biological role, major role in the synthesis of nucleoside triphosphates other than ATP. The ATP gamma phosphate is transferred to the NDP beta phosphate via a ping-pong mechanism, using a phosphorylated active-site intermediate. This is Nucleoside diphosphate kinase from Prochlorococcus marinus (strain MIT 9313).